The sequence spans 501 residues: Glycerol kinase (501 aa).

Position 12 (Thr12) interacts with ADP. Positions 12, 13, and 14 each coordinate ATP. Thr12 contributes to the sn-glycerol 3-phosphate binding site. Arg16 contributes to the ADP binding site. Residues Arg82, Glu83, Tyr134, and Asp244 each coordinate sn-glycerol 3-phosphate. 5 residues coordinate glycerol: Arg82, Glu83, Tyr134, Asp244, and Gln245. ADP contacts are provided by Thr266 and Gly310. ATP is bound by residues Thr266, Gly310, Gln314, and Gly411. Residues Gly411 and Asn415 each contribute to the ADP site.

The protein belongs to the FGGY kinase family.

It catalyses the reaction glycerol + ATP = sn-glycerol 3-phosphate + ADP + H(+). It participates in polyol metabolism; glycerol degradation via glycerol kinase pathway; sn-glycerol 3-phosphate from glycerol: step 1/1. With respect to regulation, inhibited by fructose 1,6-bisphosphate (FBP). In terms of biological role, key enzyme in the regulation of glycerol uptake and metabolism. Catalyzes the phosphorylation of glycerol to yield sn-glycerol 3-phosphate. This Methylobacterium radiotolerans (strain ATCC 27329 / DSM 1819 / JCM 2831 / NBRC 15690 / NCIMB 10815 / 0-1) protein is Glycerol kinase.